The following is an 898-amino-acid chain: Serine/threonine-protein kinase TAO3 (898 aa).

The Protein kinase domain occupies 24–277; sequence FIDLHEIGHG…AVELLRHDFI (254 aa). ATP-binding positions include 30–38 and Lys53; that span reads IGHGSFGAV. Asp147 (proton acceptor) is an active-site residue. Disordered regions lie at residues 316 to 375 and 405 to 424; these read TRNG…DESS and DEAGHGDPRPEPRPTQSVQS. Phosphoserine; by ATM is present on Ser324. 3 positions are modified to phosphoserine: Ser343, Ser346, and Ser349. Low complexity predominate over residues 349–366; the sequence is SIPSTSVSTGSRSSSVNS. Thr357 carries the post-translational modification Phosphothreonine. Ser359 carries the post-translational modification Phosphoserine. A compositionally biased stretch (basic and acidic residues) spans 405 to 416; it reads DEAGHGDPRPEP. At Ser442 the chain carries Phosphoserine. Coiled-coil stretches lie at residues 452–502, 548–649, and 754–871; these read EQEN…THAN, FLES…HAML, and LKTL…QERE. The disordered stretch occupies residues 565–596; it reads EEMNEDHSTPKKEKQERISKHKENLQHTQAEE. N6-acetyllysine is present on Lys830.

This sequence belongs to the protein kinase superfamily. STE Ser/Thr protein kinase family. STE20 subfamily. As to quaternary structure, self-associates. Interacts with ERN1 and TRAF2. Interaction with TRAF2 is facilitated under ER stress conditions, such as treatment with tunicamycin, and may promote TRAF2 phosphorylation. Interacts (via N-terminus) with STK25; the interaction promotes STK25 abundance at the level of protein expression and/or stability. Post-translationally, autophosphorylated. Phosphorylation at Ser-324 by ATM following DNA damage is required for activation of the p38/MAPK14 stress-activated MAPK cascade. Phosphorylated at Ser-324 and on Tyr residues during T cell activation. Phosphorylated by LRRK2.

Its subcellular location is the cytoplasm. The protein localises to the cell membrane. The protein resides in the membrane raft. It localises to the lipid droplet. It carries out the reaction L-seryl-[protein] + ATP = O-phospho-L-seryl-[protein] + ADP + H(+). It catalyses the reaction L-threonyl-[protein] + ATP = O-phospho-L-threonyl-[protein] + ADP + H(+). Serine/threonine-protein kinase that acts as a regulator of the p38/MAPK14 stress-activated MAPK cascade and of the MAPK8/JNK cascade. In response to DNA damage, involved in the G2/M transition DNA damage checkpoint by activating the p38/MAPK14 stress-activated MAPK cascade, probably by mediating phosphorylation of upstream MAP2K3 and MAP2K6 kinases. Inhibits basal activity of the MAPK8/JNK cascade and diminishes its activation in response to epidermal growth factor (EGF). Positively regulates canonical T cell receptor (TCR) signaling by preventing early PTPN6/SHP1-mediated inactivation of LCK, ensuring sustained TCR signaling that is required for optimal activation and differentiation of T cells. Phosphorylates PTPN6/SHP1 on 'Thr-394', leading to its polyubiquitination and subsequent proteasomal degradation. Required for cell surface expression of metalloprotease ADAM10 on type 1 transitional B cells which is necessary for their NOTCH-mediated development into marginal zone B cells. Also required for the NOTCH-mediated terminal differentiation of splenic conventional type 2 dendritic cells. Positively regulates osteoblast differentiation by acting as an upstream activator of the JNK pathway. Promotes JNK signaling in hepatocytes and positively regulates hepatocyte lipid storage by inhibiting beta-oxidation and triacylglycerol secretion while enhancing lipid synthesis. Restricts age-associated inflammation by negatively regulating differentiation of macrophages and their production of pro-inflammatory cytokines. Plays a role in negatively regulating the abundance of regulatory T cells in white adipose tissue. This is Serine/threonine-protein kinase TAO3 (Taok3) from Mus musculus (Mouse).